The following is a 482-amino-acid chain: Bifunctional protein GlmU (482 aa).

The interval 1-241 (MTASTEAAVV…SALVTGVNDR (241 aa)) is pyrophosphorylase. UDP-N-acetyl-alpha-D-glucosamine contacts are provided by residues 12–15 (LAAG), lysine 26, glutamine 83, 88–89 (GT), 112–114 (SGD), glycine 151, glutamate 166, asparagine 181, and asparagine 239. Position 114 (aspartate 114) interacts with Mg(2+). Mg(2+) is bound at residue asparagine 239. Residues 242 to 262 (VQLSDLGKVLNRRIVAAHQRA) form a linker region. The tract at residues 263-482 (GVTIIDPGST…AARKALGDES (220 aa)) is N-acetyltransferase. UDP-N-acetyl-alpha-D-glucosamine is bound by residues arginine 344 and lysine 362. Residue histidine 374 is the Proton acceptor of the active site. 2 residues coordinate UDP-N-acetyl-alpha-D-glucosamine: tyrosine 377 and asparagine 388. Acetyl-CoA-binding positions include alanine 391, 397–398 (NY), serine 416, and alanine 434. The interval 463–482 (KKRPGSAADKAARKALGDES) is disordered. Residues 472–482 (KAARKALGDES) show a composition bias toward basic and acidic residues.

In the N-terminal section; belongs to the N-acetylglucosamine-1-phosphate uridyltransferase family. The protein in the C-terminal section; belongs to the transferase hexapeptide repeat family. In terms of assembly, homotrimer. Mg(2+) serves as cofactor.

Its subcellular location is the cytoplasm. The catalysed reaction is alpha-D-glucosamine 1-phosphate + acetyl-CoA = N-acetyl-alpha-D-glucosamine 1-phosphate + CoA + H(+). It catalyses the reaction N-acetyl-alpha-D-glucosamine 1-phosphate + UTP + H(+) = UDP-N-acetyl-alpha-D-glucosamine + diphosphate. Its pathway is nucleotide-sugar biosynthesis; UDP-N-acetyl-alpha-D-glucosamine biosynthesis; N-acetyl-alpha-D-glucosamine 1-phosphate from alpha-D-glucosamine 6-phosphate (route II): step 2/2. The protein operates within nucleotide-sugar biosynthesis; UDP-N-acetyl-alpha-D-glucosamine biosynthesis; UDP-N-acetyl-alpha-D-glucosamine from N-acetyl-alpha-D-glucosamine 1-phosphate: step 1/1. It participates in bacterial outer membrane biogenesis; LPS lipid A biosynthesis. In terms of biological role, catalyzes the last two sequential reactions in the de novo biosynthetic pathway for UDP-N-acetylglucosamine (UDP-GlcNAc). The C-terminal domain catalyzes the transfer of acetyl group from acetyl coenzyme A to glucosamine-1-phosphate (GlcN-1-P) to produce N-acetylglucosamine-1-phosphate (GlcNAc-1-P), which is converted into UDP-GlcNAc by the transfer of uridine 5-monophosphate (from uridine 5-triphosphate), a reaction catalyzed by the N-terminal domain. This chain is Bifunctional protein GlmU, found in Mycolicibacterium smegmatis (strain ATCC 700084 / mc(2)155) (Mycobacterium smegmatis).